Here is a 198-residue protein sequence, read N- to C-terminus: Acyl carrier protein phosphodiesterase (198 aa).

It belongs to the AcpH family.

It carries out the reaction holo-[ACP] + H2O = apo-[ACP] + (R)-4'-phosphopantetheine + H(+). Functionally, converts holo-ACP to apo-ACP by hydrolytic cleavage of the phosphopantetheine prosthetic group from ACP. This chain is Acyl carrier protein phosphodiesterase, found in Photorhabdus laumondii subsp. laumondii (strain DSM 15139 / CIP 105565 / TT01) (Photorhabdus luminescens subsp. laumondii).